Consider the following 479-residue polypeptide: Polyadenylate-binding protein-interacting protein 1 (479 aa).

The segment at 1–114 (MSDGFDRAPG…PQQNSESAMA (114 aa)) is disordered. N-acetylalanine is present on S2. A compositionally biased stretch (gly residues) spans 11–33 (AGRGRSRGLGRGGGGPEGGGFPN). An Omega-N-methylarginine modification is found at R21. Residues 45–69 (PPQPKAPGFLQPPPLRQPRTTPPPG) show a composition bias toward pro residues. A compositionally biased stretch (polar residues) spans 98–111 (PSSQDKIPQQNSES). The tract at residues 116–143 (PQVVVAPVLMSKLSVNAPEFYPSGYSSS) is PABPC1-interacting motif-2 (PAM2). The interval 157–375 (TLSEYVQDFL…LLKLVELRSS (219 aa)) is PAIP1 middle domain (PAIP1M). The MIF4G domain maps to 159–376 (SEYVQDFLNH…LKLVELRSSN (218 aa)). A disordered region spans residues 435 to 455 (DYEENGTDLSGAGDPYLDDID). The segment at 440–479 (GTDLSGAGDPYLDDIDDEMDPEIEEAYEKFCLESERKRKQ) is PABPC1-interacting motif-1 (PAM1).

Interacts with the RRM1-RRM2 and C-terminus regions of PABPC1 in a 1:1 stoichiometry. Interacts with EIF4A. In terms of assembly, (Microbial infection) Interacts (via PAIP1M) with human SARS coronaviruses SARS-COV and SARS-COV-2 NSP3 protein (via SARS-unique domain); the interaction increases binding affinity with PABPC1.

It is found in the cytoplasm. Its function is as follows. Acts as a coactivator in the regulation of translation initiation of poly(A)-containing mRNAs. Its stimulatory activity on translation is mediated via its action on PABPC1. Competes with PAIP2 for binding to PABPC1. Its association with EIF4A and PABPC1 may potentiate contacts between mRNA termini. May also be involved in translationally coupled mRNA turnover. Implicated with other RNA-binding proteins in the cytoplasmic deadenylation/translational and decay interplay of the FOS mRNA mediated by the major coding-region determinant of instability (mCRD) domain. (Microbial infection) Upon interaction with SARS coronavirus SARS-CoV NSP3 protein, plays an important role in viral protein synthesis. In Homo sapiens (Human), this protein is Polyadenylate-binding protein-interacting protein 1.